Here is a 77-residue protein sequence, read N- to C-terminus: Large ribosomal subunit protein bL28 (77 aa).

This sequence belongs to the bacterial ribosomal protein bL28 family.

The protein is Large ribosomal subunit protein bL28 of Variovorax paradoxus (strain S110).